A 994-amino-acid chain; its full sequence is Chloride channel protein E (994 aa).

The segment at 1 to 33 is disordered; the sequence is MTRKENEESESLSSSSSPIDNSNNNNNNNNHSI. The Cytoplasmic portion of the chain corresponds to 1 to 163; that stretch reads MTRKENEESE…HWLGKERIST (163 aa). The segment covering 11-32 has biased composition (low complexity); it reads SLSSSSSPIDNSNNNNNNNNHS. The next 11 helical transmembrane spans lie at 164-184, 227-247, 271-291, 300-320, 334-354, 362-382, 410-430, 449-469, 505-525, 527-547, and 554-574; these read LLFIPTLGILIALMGILCDFL, IVFVGYSVFFALISVCCISFI, VLGFKTLVSKIVGMVCASAAG, FMHASAIISQMLMNLKVFGAI, ALTSGVVANFGAPIGGLLFAI, VMGNLWKGFLCATTTAIIFFL, LITFVGIGIITGLIGAFFVFI, IILVLVVSLFSAIITYSAGPL, LLVFIVVKLILTAFNIVLPIP, GAITPFIVTGAALGRLFGEIL, and QAIEPAGFAAIASAGLVSGTI. The 62-residue stretch at 644-705 folds into the CBS 1 domain; that stretch reads MKKNINYLSM…LDIHIENIEQ (62 aa). 3 disordered regions span residues 715–767, 802–822, and 846–872; these read FVNN…NSEN, IKPNQDESSSNSNGGSSSDFE, and DENSSLGEKPIIEHDDEDDDEEEGDGI. Low complexity-rich tracts occupy residues 717–764 and 809–822; these read NNNN…NSNN and SSSNSNGGSSSDFE. The segment covering 859–870 has biased composition (acidic residues); that stretch reads HDDEDDDEEEGD. The CBS 2 domain maps to 944–994; it reads MDLAPSQVPDLTPLNKVFHLFTMLGLGFTYVTSLGKLVGVITKNSLMEQDL.

This sequence belongs to the chloride channel (TC 2.A.49) family.

The protein resides in the membrane. In terms of biological role, voltage-gated chloride channel. Chloride channels may have several functions including the regulation of cell volume, membrane potential stabilization and signal transduction. This chain is Chloride channel protein E (clcE), found in Dictyostelium discoideum (Social amoeba).